The following is a 320-amino-acid chain: Putative protein FRMPD2-like (320 aa).

PDZ domains are found at residues 1–46 and 90–178; these read MTSI…ERRV and EVKL…CRPP. A disordered region spans residues 215–239; that stretch reads DQEDSWRDSASPDAGEGLGLRPESS.

The protein is Putative protein FRMPD2-like of Homo sapiens (Human).